A 397-amino-acid chain; its full sequence is 1-deoxy-D-xylulose 5-phosphate reductoisomerase (397 aa).

The NADPH site is built by threonine 10, glycine 11, serine 12, isoleucine 13, asparagine 38, and asparagine 125. Residue lysine 126 coordinates 1-deoxy-D-xylulose 5-phosphate. NADPH is bound at residue glutamate 127. Aspartate 151 lines the Mn(2+) pocket. Residues serine 152, glutamate 153, serine 187, and histidine 210 each contribute to the 1-deoxy-D-xylulose 5-phosphate site. Glutamate 153 is a binding site for Mn(2+). Glycine 216 serves as a coordination point for NADPH. 1-deoxy-D-xylulose 5-phosphate is bound by residues serine 223, asparagine 228, lysine 229, and glutamate 232. Position 232 (glutamate 232) interacts with Mn(2+).

This sequence belongs to the DXR family. In terms of assembly, homodimer. Mg(2+) serves as cofactor. It depends on Mn(2+) as a cofactor.

The catalysed reaction is 2-C-methyl-D-erythritol 4-phosphate + NADP(+) = 1-deoxy-D-xylulose 5-phosphate + NADPH + H(+). Its pathway is isoprenoid biosynthesis; isopentenyl diphosphate biosynthesis via DXP pathway; isopentenyl diphosphate from 1-deoxy-D-xylulose 5-phosphate: step 1/6. Functionally, catalyzes the NADPH-dependent rearrangement and reduction of 1-deoxy-D-xylulose-5-phosphate (DXP) to 2-C-methyl-D-erythritol 4-phosphate (MEP). The sequence is that of 1-deoxy-D-xylulose 5-phosphate reductoisomerase from Blochmanniella pennsylvanica (strain BPEN).